We begin with the raw amino-acid sequence, 289 residues long: ATP synthase subunit a (289 aa).

A run of 6 helical transmembrane segments spans residues 43 to 63, 103 to 123, 160 to 180, 193 to 213, 232 to 252, and 259 to 279; these read AFHV…VLLF, VIAP…AVDL, FSVF…GGFI, IFVQ…TLIA, VFIL…GLGV, and AVFH…LTIV.

This sequence belongs to the ATPase A chain family. As to quaternary structure, F-type ATPases have 2 components, CF(1) - the catalytic core - and CF(0) - the membrane proton channel. CF(1) has five subunits: alpha(3), beta(3), gamma(1), delta(1), epsilon(1). CF(0) has three main subunits: a(1), b(2) and c(9-12). The alpha and beta chains form an alternating ring which encloses part of the gamma chain. CF(1) is attached to CF(0) by a central stalk formed by the gamma and epsilon chains, while a peripheral stalk is formed by the delta and b chains.

It is found in the cell inner membrane. Key component of the proton channel; it plays a direct role in the translocation of protons across the membrane. The sequence is that of ATP synthase subunit a from Pseudomonas fluorescens (strain Pf0-1).